Reading from the N-terminus, the 782-residue chain is Protein phosphatase 1 regulatory subunit 12C (782 aa).

Positions 1 to 17 (MSGEDGPAAGPGAAAAA) are enriched in low complexity. A disordered region spans residues 1 to 43 (MSGEDGPAAGPGAAAAAARERRREQLRQWGARAGAEPGPGERR). Serine 2 carries the post-translational modification N-acetylserine. ANK repeat units follow at residues 100–129 (DGIS…TVNQ), 133–162 (EGWT…NIAA), 226–255 (TGAS…DPEL), and 259–288 (DGWT…GMDS). The stretch at 297-329 (CDLADEEVLSLLEELARKQEDLRNQKEASQSRG) forms a coiled coil. The disordered stretch occupies residues 316–686 (EDLRNQKEAS…EEPDGGFRTL (371 aa)). Residues 323–337 (EASQSRGQEPQAPSS) show a composition bias toward polar residues. Positions 349 to 365 (SSREKISLQDLSKERRP) are enriched in basic and acidic residues. Positions 374–383 (QDEDEGEEGP) are enriched in acidic residues. Residues serine 399, serine 407, serine 427, serine 452, and serine 509 each carry the phosphoserine modification. Residues 449-463 (RSASSSWLEGTSTQA) are compositionally biased toward polar residues. Residues 537–546 (VRDEESESQR) show a composition bias toward basic and acidic residues. Residues 547–557 (KARSRLMRQSR) show a composition bias toward basic residues. Threonine 560 carries the phosphothreonine; by CDC42BP and ROCK2 modification. Residues 567–583 (DLKEAEKAAGKAPESEK) show a composition bias toward basic and acidic residues. Phosphoserine occurs at positions 604 and 647. Residues 670-680 (PEPEPESEEPD) show a composition bias toward acidic residues. Positions 681–782 (GGFRTLYAEL…LIRVISKLSK (102 aa)) form a coiled coil.

In terms of assembly, PP1 comprises a catalytic subunit, PPP1CA, PPP1CB or PPP1CC, and one or several targeting or regulatory subunits. PPP1R12C mediates binding to myosin. Interacts via its N-terminus with PPP1CB. Interacts with IL16. Interacts with the coiled-coil domain of MPRIP. Interacts with NOD2. Post-translationally, phosphorylation at Thr-560 is essential for its interaction with PPP1CB. In terms of tissue distribution, ubiquitously expressed. Highly expressed in heart.

It is found in the cytoplasm. Its subcellular location is the cytoskeleton. The protein localises to the stress fiber. Functionally, regulates myosin phosphatase activity. The sequence is that of Protein phosphatase 1 regulatory subunit 12C from Homo sapiens (Human).